We begin with the raw amino-acid sequence, 239 residues long: ATP-dependent dethiobiotin synthetase BioD (239 aa).

Residue 15 to 20 (EIGKTF) coordinates ATP. Position 19 (Thr19) interacts with Mg(2+). Lys40 is a catalytic residue. ATP is bound by residues Asp57, 118 to 121 (EGVG), 178 to 179 (NH), and 211 to 213 (AHL). Residues Asp57 and Glu118 each coordinate Mg(2+).

This sequence belongs to the dethiobiotin synthetase family. Homodimer. It depends on Mg(2+) as a cofactor.

It is found in the cytoplasm. The catalysed reaction is (7R,8S)-7,8-diammoniononanoate + CO2 + ATP = (4R,5S)-dethiobiotin + ADP + phosphate + 3 H(+). Its pathway is cofactor biosynthesis; biotin biosynthesis; biotin from 7,8-diaminononanoate: step 1/2. In terms of biological role, catalyzes a mechanistically unusual reaction, the ATP-dependent insertion of CO2 between the N7 and N8 nitrogen atoms of 7,8-diaminopelargonic acid (DAPA, also called 7,8-diammoniononanoate) to form a ureido ring. This is ATP-dependent dethiobiotin synthetase BioD from Burkholderia vietnamiensis (strain G4 / LMG 22486) (Burkholderia cepacia (strain R1808)).